We begin with the raw amino-acid sequence, 301 residues long: Probable 5-dehydro-4-deoxyglucarate dehydratase (301 aa).

It belongs to the DapA family.

The enzyme catalyses 5-dehydro-4-deoxy-D-glucarate + H(+) = 2,5-dioxopentanoate + CO2 + H2O. It functions in the pathway carbohydrate acid metabolism; D-glucarate degradation; 2,5-dioxopentanoate from D-glucarate: step 2/2. This is Probable 5-dehydro-4-deoxyglucarate dehydratase from Chelativorans sp. (strain BNC1).